A 371-amino-acid chain; its full sequence is Pyruvate dehydrogenase E1 component subunit alpha (371 aa).

Heterodimer of an alpha and a beta chain. The cofactor is thiamine diphosphate.

The catalysed reaction is N(6)-[(R)-lipoyl]-L-lysyl-[protein] + pyruvate + H(+) = N(6)-[(R)-S(8)-acetyldihydrolipoyl]-L-lysyl-[protein] + CO2. Activity of the E1 module is inhibited by the pyruvate dehydrogenase inhibitor PdhI. In terms of biological role, the pyruvate dehydrogenase complex catalyzes the overall conversion of pyruvate to acetyl-CoA and CO(2). It contains multiple copies of three enzymatic components: pyruvate dehydrogenase (E1), dihydrolipoamide acetyltransferase (E2) and lipoamide dehydrogenase (E3). The B.subtilis PDH complex also possesses branched-chain 2-oxoacid dehydrogenase (BCDH) activity. This is Pyruvate dehydrogenase E1 component subunit alpha from Bacillus subtilis (strain 168).